The chain runs to 181 residues: MKILFCDVLLLSLLSSVFSSCPEDCLTCQERLHPAPGSFNLKLCILQCEEKVFPRPLWTLCTKAMASDSEQLSPADPELTSAALYQSKASEMQHLKRMPRVRSVVQARDAEPEADAEPVADEADEVEQKQLQKRFGGFTGARKSARKLANQKRFSEFMRQYLVLSMQSSQRRRTLHQNGNV.

The first 19 residues, 1-19 (MKILFCDVLLLSLLSSVFS), serve as a signal peptide directing secretion. Residues 20–95 (SCPEDCLTCQ…QSKASEMQHL (76 aa)) constitute a propeptide that is removed on maturation. The tract at residues 103–125 (SVVQARDAEPEADAEPVADEADE) is disordered. 2 consecutive repeat copies span residues 109-114 (DAEPEA) and 115-120 (DAEPVA). Residues 109–120 (DAEPEADAEPVA) form a 2 X 6 AA tandem repeats of D-A-E-P-X-A region. A compositionally biased stretch (acidic residues) spans 112–125 (PEADAEPVADEADE). Positions 174 to 181 (TLHQNGNV) are excised as a propeptide.

The protein belongs to the opioid neuropeptide precursor family. Post-translationally, specific enzymatic cleavages at paired basic residues probably yield other active peptides besides nociceptin. In terms of processing, the N-terminal domain contains 6 conserved cysteines thought to be involved in disulfide bonding and/or processing. Expressed predominantly in the spinal cord and brain, being more abundant in the hypothalamus and striatum. Also found in small amounts in ovary.

It is found in the secreted. Its function is as follows. Ligand of the opioid receptor-like receptor OPRL1. It may act as a transmitter in the brain by modulating nociceptive and locomotor behavior. May be involved in neuronal differentiation and development. Blocks nociceptin action in pain transmission by inhibiting nociceptin-induced hyperalgesia and allodynia. In terms of biological role, has potent analgesic activity. This chain is Prepronociceptin (Pnoc), found in Rattus norvegicus (Rat).